Consider the following 627-residue polypeptide: Plastin-3 (627 aa).

2 consecutive EF-hand domains span residues glutamate 8 to proline 43 and lysine 48 to glycine 83. Ca(2+) contacts are provided by aspartate 21, asparagine 23, asparagine 25, glutamate 32, aspartate 61, asparagine 63, aspartate 65, methionine 67, and glutamate 72. Actin-binding regions lie at residues threonine 105–lysine 378 and proline 379–methionine 624. Calponin-homology (CH) domains lie at glutamate 119 to leucine 235, leucine 263 to proline 374, threonine 393 to threonine 503, and lysine 515 to methionine 624.

The protein resides in the cytoplasm. In terms of biological role, actin-bundling protein. The protein is Plastin-3 (pls3) of Danio rerio (Zebrafish).